Consider the following 146-residue polypeptide: Aminoglycoside N(6')-acetyltransferase type 1 (146 aa).

One can recognise an N-acetyltransferase domain in the interval 1 to 146 (MNIMPISESQ…RVVYFKKNIG (146 aa)). The substrate site is built by tryptophan 22, histidine 25, tyrosine 66, and glutamate 79. Residue 81-83 (IFV) coordinates acetyl-CoA. Aspartate 115 lines the substrate pocket. Asparagine 120 is a binding site for acetyl-CoA. Glutamate 136 is a substrate binding site.

As to quaternary structure, homodimer.

It catalyses the reaction kanamycin B + acetyl-CoA = N(6')-acetylkanamycin B + CoA + H(+). Its function is as follows. Catalyzes the transfer of an acetyl group from acetyl-CoA to the 6'-amino group of aminoglycoside molecules conferring resistance to antibiotics containing the purpurosamine ring including amikacin, kanamycin, tobramycin and netilmicin. The chain is Aminoglycoside N(6')-acetyltransferase type 1 from Acinetobacter baumannii.